We begin with the raw amino-acid sequence, 604 residues long: Siderophore iron transporter mirB (604 aa).

Positions 1 to 61 (MTIGSKFSLL…DNSSDEALPS (61 aa)) are disordered. Transmembrane regions (helical) follow at residues 73 to 95 (AVTLVWSKWSLVAVFCLLWLVTL), 115 to 137 (FQSHSLLTVINIVSSAMVSALYI), 149 to 168 (AEGWLVMVGLSTLGLIMMAA), 178 to 200 (ADVFYSVGFAGMNYILCVLAADI), 207 to 224 (GIAFAFTSSPYMITAFAG), 237 to 259 (WRWGFGAFAIIFPFVASPVYFVL), 289 to 311 (YFFAFDIPGVILLAGGLTVFLLP), 326 to 343 (YIIAMIVTGFVVMVLFVL), 363 to 385 (TVLGACLIDATYQMSYYCWNSYF), 400 to 422 (AGYVGSTFQVVSGVLLFMVGFAI), 427 to 449 (YFRWLLFIGVPLYIFAQGLMIHF), 454 to 476 (QYIGYIVMCEIFISIGGSIFVLL), 489 to 511 (YVAAALAVLFISGGIGGAVGNAI), and 566 to 588 (AQARMLAAGTGLMALMFIWMFMV).

This sequence belongs to the major facilitator superfamily.

The protein resides in the membrane. Involved in the transport of siderophore triacestylfusarinine C and so has a role in iron homeostasis. The chain is Siderophore iron transporter mirB (mirB) from Emericella nidulans (strain FGSC A4 / ATCC 38163 / CBS 112.46 / NRRL 194 / M139) (Aspergillus nidulans).